The chain runs to 418 residues: Glutamyl-tRNA reductase (418 aa).

Residues 49–52 (TCNR), Ser-109, 114–116 (EPQ), and Gln-120 each bind substrate. The active-site Nucleophile is Cys-50. 189–194 (GAGETI) provides a ligand contact to NADP(+).

It belongs to the glutamyl-tRNA reductase family. In terms of assembly, homodimer.

It carries out the reaction (S)-4-amino-5-oxopentanoate + tRNA(Glu) + NADP(+) = L-glutamyl-tRNA(Glu) + NADPH + H(+). It participates in porphyrin-containing compound metabolism; protoporphyrin-IX biosynthesis; 5-aminolevulinate from L-glutamyl-tRNA(Glu): step 1/2. Its function is as follows. Catalyzes the NADPH-dependent reduction of glutamyl-tRNA(Glu) to glutamate 1-semialdehyde (GSA). The sequence is that of Glutamyl-tRNA reductase from Shigella dysenteriae serotype 1 (strain Sd197).